Reading from the N-terminus, the 259-residue chain is MAKKKPVEKNGLVYKEFQKQVSNLKKAGLIPKTLDVRKVKPTKHYKGLVSKYKDVATGGAKLAAIPNPAVIETLEARGESIIKKGGKAYLKARQQINQRGQIVNPFTVRVTKRGEVVRRYRKTTPEGKPVYITQRELPIKFENMEQWLTELKAAGFQLQPGEQIYFTFNGNYSRRTYTSFDEAFNKFMTYDIIIDAVAGKLKVEDEADLVKSVGFQRISGPEAKAYNRNRIVLPEMQFSQAAKKKYKRRQKRGYGSKGV.

Tyr-190 carries the post-translational modification O-(5'-phospho-DNA)-tyrosine. Positions 243–259 match the Nuclear localization signal motif; it reads KKKYKRRQKRGYGSKGV.

The protein belongs to the tectivirus DNA terminal protein family. In terms of assembly, heterodimer with viral polymerase. Binds to ssDNA.

It localises to the virion. It is found in the host nucleus. In terms of biological role, acts as a primer for viral genomic replication. DNA terminal protein is covalently linked to the 5'-ends of both strands of the genome through a phosphodiester bond between the beta-hydroxyl group of a tyrosine residue and the 5'-phosphate of the terminal deoxyadenylate. This protein is essential for DNA replication and is involved in the priming of DNA elongation. This chain is DNA terminal protein (VIII), found in Enterobacteria phage PRD1 (Bacteriophage PRD1).